Consider the following 338-residue polypeptide: Fructose-1,6-bisphosphatase class 1 1 (338 aa).

Residues Glu94, Asp116, Leu118, and Asp119 each coordinate Mg(2+). Residues 119 to 122 (DGSS), Asn210, and Lys276 contribute to the substrate site. Glu282 is a Mg(2+) binding site.

It belongs to the FBPase class 1 family. As to quaternary structure, homotetramer. It depends on Mg(2+) as a cofactor.

Its subcellular location is the cytoplasm. It carries out the reaction beta-D-fructose 1,6-bisphosphate + H2O = beta-D-fructose 6-phosphate + phosphate. Its pathway is carbohydrate biosynthesis; gluconeogenesis. The protein is Fructose-1,6-bisphosphatase class 1 1 of Paraburkholderia phymatum (strain DSM 17167 / CIP 108236 / LMG 21445 / STM815) (Burkholderia phymatum).